The primary structure comprises 273 residues: Oxidized low-density lipoprotein receptor 1 (273 aa).

Residues Met1–Lys22 form a disordered region. The Cytoplasmic portion of the chain corresponds to Met1–Cys36. Residues Cys36 and Cys46 are each lipidated (S-palmitoyl cysteine). The chain crosses the membrane as a helical; Signal-anchor for type II membrane protein span at residues Leu37–Gly57. The neck stretch occupies residues Met58–Trp150. The Extracellular segment spans residues Met58–Gln273. Residues Ser64–Leu123 are a coiled coil. N-linked (GlcNAc...) asparagine glycosylation is present at Asn73. The N-linked (GlcNAc...) (complex) asparagine glycan is linked to Asn139. 3 disulfides stabilise this stretch: Cys144-Cys155, Cys172-Cys264, and Cys243-Cys256. The region spanning His151–Gln265 is the C-type lectin domain.

As to quaternary structure, homodimer; disulfide-linked. May form a hexamer composed of 3 homodimers. Interacts with HSP70. In terms of assembly, (Microbial infection) Binds to the head and beginning of the coiled stalk of N.meningitidis adhesin A (nadA) variant 3; binding can be abrogated by monoclonal antibodies against the specific regions of NadA. Binding occurs in protein microarrays, in solution and when LOX-1 is expressed on the cell surface. Post-translationally, the intrachain disulfide-bonds prevent N-glycosylation at some sites. In terms of processing, N-glycosylated. As to expression, expressed at high level in endothelial cells and vascular-rich organs such as placenta, lung, liver and brain, aortic intima, bone marrow, spinal cord and substantia nigra. Also expressed at the surface of dendritic cells. Widely expressed at intermediate and low level.

It localises to the cell membrane. The protein localises to the membrane raft. Its subcellular location is the secreted. Functionally, receptor that mediates the recognition, internalization and degradation of oxidatively modified low density lipoprotein (oxLDL) by vascular endothelial cells. OxLDL is a marker of atherosclerosis that induces vascular endothelial cell activation and dysfunction, resulting in pro-inflammatory responses, pro-oxidative conditions and apoptosis. Its association with oxLDL induces the activation of NF-kappa-B through an increased production of intracellular reactive oxygen and a variety of pro-atherogenic cellular responses including a reduction of nitric oxide (NO) release, monocyte adhesion and apoptosis. In addition to binding oxLDL, it acts as a receptor for the HSP70 protein involved in antigen cross-presentation to naive T-cells in dendritic cells, thereby participating in cell-mediated antigen cross-presentation. Also involved in inflammatory process, by acting as a leukocyte-adhesion molecule at the vascular interface in endotoxin-induced inflammation. Also acts as a receptor for advanced glycation end (AGE) products, activated platelets, monocytes, apoptotic cells and both Gram-negative and Gram-positive bacteria. In terms of biological role, (Microbial infection) May serve as a receptor for adhesin A variant 3 (nadA) of N.meningitidis. This Homo sapiens (Human) protein is Oxidized low-density lipoprotein receptor 1 (OLR1).